Reading from the N-terminus, the 427-residue chain is Enolase (427 aa).

Gln-163 contacts (2R)-2-phosphoglycerate. The Proton donor role is filled by Glu-205. Mg(2+)-binding residues include Asp-242, Glu-285, and Asp-312. (2R)-2-phosphoglycerate contacts are provided by Lys-337, Arg-366, Ser-367, and Lys-388. The active-site Proton acceptor is the Lys-337.

This sequence belongs to the enolase family. Mg(2+) is required as a cofactor.

The protein localises to the cytoplasm. It localises to the secreted. Its subcellular location is the cell surface. It carries out the reaction (2R)-2-phosphoglycerate = phosphoenolpyruvate + H2O. It functions in the pathway carbohydrate degradation; glycolysis; pyruvate from D-glyceraldehyde 3-phosphate: step 4/5. Catalyzes the reversible conversion of 2-phosphoglycerate (2-PG) into phosphoenolpyruvate (PEP). It is essential for the degradation of carbohydrates via glycolysis. This Rhodopseudomonas palustris (strain BisB5) protein is Enolase.